A 485-amino-acid polypeptide reads, in one-letter code: uncharacterized protein (485 aa).

The Cytoplasmic segment spans residues M1–S30. The chain crosses the membrane as a helical span at residues G31–F51. The Extracellular segment spans residues C52–I485. The N-linked (GlcNAc...) asparagine glycan is linked to N67. The tract at residues S74–D404 is phosphodiesterase. Residue T118 is the Nucleophile of the active site. N-linked (GlcNAc...) asparagine glycans are attached at residues N306, N338, N453, and N467.

The protein belongs to the nucleotide pyrophosphatase/phosphodiesterase family.

The protein resides in the membrane. This is an uncharacterized protein from Schizosaccharomyces pombe (strain 972 / ATCC 24843) (Fission yeast).